We begin with the raw amino-acid sequence, 176 residues long: ATP-dependent protease subunit HslV (176 aa).

The active site involves threonine 2. Glycine 157, cysteine 160, and threonine 163 together coordinate Na(+).

This sequence belongs to the peptidase T1B family. HslV subfamily. A double ring-shaped homohexamer of HslV is capped on each side by a ring-shaped HslU homohexamer. The assembly of the HslU/HslV complex is dependent on binding of ATP.

It is found in the cytoplasm. It catalyses the reaction ATP-dependent cleavage of peptide bonds with broad specificity.. With respect to regulation, allosterically activated by HslU binding. In terms of biological role, protease subunit of a proteasome-like degradation complex believed to be a general protein degrading machinery. The protein is ATP-dependent protease subunit HslV of Klebsiella pneumoniae (strain 342).